Reading from the N-terminus, the 168-residue chain is Ecotin (168 aa).

The signal sequence occupies residues 1-21; the sequence is MKRLSIAITSLLMAASASTIA. An intrachain disulfide couples C76 to C113.

This sequence belongs to the protease inhibitor I11 (ecotin) family. As to quaternary structure, homodimer.

Its subcellular location is the periplasm. General inhibitor of pancreatic serine proteases: inhibits chymotrypsin, trypsin, elastases, factor X, kallikrein as well as a variety of other proteases. The polypeptide is Ecotin (Yersinia enterocolitica serotype O:8 / biotype 1B (strain NCTC 13174 / 8081)).